We begin with the raw amino-acid sequence, 126 residues long: Methylglyoxal synthase (126 aa).

Residues 1 to 126 (MEKKIALIAH…LIKGLESLIF (126 aa)) enclose the MGS-like domain. Substrate contacts are provided by residues His10, Lys14, 36 to 39 (TGTT), and 56 to 57 (SG). The active-site Proton donor/acceptor is Asp62. His89 is a substrate binding site.

The protein belongs to the methylglyoxal synthase family.

It carries out the reaction dihydroxyacetone phosphate = methylglyoxal + phosphate. Catalyzes the formation of methylglyoxal from dihydroxyacetone phosphate. This chain is Methylglyoxal synthase, found in Borreliella burgdorferi (strain ATCC 35210 / DSM 4680 / CIP 102532 / B31) (Borrelia burgdorferi).